We begin with the raw amino-acid sequence, 294 residues long: Lipoprotein NlpI (294 aa).

An N-terminal signal peptide occupies residues 1–18 (MKPFLRWCFVATALTLAG). The N-palmitoyl cysteine moiety is linked to residue cysteine 19. Cysteine 19 is lipidated: S-diacylglycerol cysteine. 3 TPR repeats span residues 62–95 (AQLLYERGVLYDSLGLRALARNDFSQALAIRPDM), 96–129 (PEVFNYLGIYLTQAGNFDAAYEAFDSVLELDPTY), and 234–267 (SETNFYLGKYYLSLGDSDSATALFKLAVANNVHN).

Homodimer.

Its subcellular location is the cell membrane. Its function is as follows. May be involved in cell division. May play a role in bacterial septation or regulation of cell wall degradation during cell division. This Shigella boydii serotype 4 (strain Sb227) protein is Lipoprotein NlpI (nlpI).